Here is a 380-residue protein sequence, read N- to C-terminus: Cytochrome b (380 aa).

4 helical membrane-spanning segments follow: residues 33–53 (FGSL…FLAM), 77–98 (WLIR…YMHI), 113–133 (WNIG…GYVL), and 178–198 (FFAF…LHLL). H83 and H97 together coordinate heme b. Heme b is bound by residues H182 and H196. Residue H201 participates in a ubiquinone binding. 4 helical membrane-spanning segments follow: residues 226-246 (YKDL…ALFA), 288-308 (LGGV…PILH), 320-340 (LTQF…WIGG), and 347-367 (FIII…VLAP).

It belongs to the cytochrome b family. As to quaternary structure, the cytochrome bc1 complex contains 3 respiratory subunits (MT-CYB, CYC1 and UQCRFS1), 2 core proteins (UQCRC1 and UQCRC2) and probably 6 low-molecular weight proteins. Heme b serves as cofactor.

It is found in the mitochondrion inner membrane. Component of the ubiquinol-cytochrome c reductase complex (complex III or cytochrome b-c1 complex) that is part of the mitochondrial respiratory chain. The b-c1 complex mediates electron transfer from ubiquinol to cytochrome c. Contributes to the generation of a proton gradient across the mitochondrial membrane that is then used for ATP synthesis. The chain is Cytochrome b (mt-cyb) from Salmo salar (Atlantic salmon).